The sequence spans 738 residues: MADTQYILPNDIGVSSLDCREAFRLLSPTERLYAHHLSRAAWYGGLAVLLQTSPEAPYIYALLSRLFRAQDPDQLRQHALAEGLTEEEYQAFLVYAAGVYSNMGNYKSFGDTKFVPNLPKEKLERVILGSKAAQQHPEEVRSLWQTCGELMFSLEPRLRHLGLGKEGVTTYFSGDCAMEDAKLAQDFLDSQNLSAYNTRLFKVVGQEGKYHYEVRLASVLNTEPALDSELTSKLKSYEFQGNHFQVTRGDYAPILQKVVEHLEKAKAYAANSHQEQMLAQYVESFTQGSIEAHKRGSRFWIQDKGPIVESYIGFIESYRDPFGSRGEFEGFVAMVNKDMSAKFERLVASAEQLLKELPWPPAFEKDKFLTPDFTSLDVLTFAGSGIPAGINIPNYDDLRQTEGFKNVSLGNVLAVAYATKREKLTFMEEEDKDLYIRWKGPSFDVQVGLHELLGHGSGKLFVQDEKGAFNFDQETVINPETGEQIQSWYRSGETWDSKFSTIASSYEECRAESVGLYLCLNPQVLQIFGFEGTDAEDVIYVNWLNMVRAGLLALEFYTPETANWRQAHMQARFVILRVLLEAGEGLVTVTPTTGSDGRPDARVHLDRSKIRSVGKPALERFLRRLQVLKSTGDVVAGRALYEGYAAVTDAPPECFLTLRDTVLLRKESRKLIVQPNTRLEGSEVQLVEYEASAAGLIRSFCERFPEDGPELEEVLTQLATADAQFWRDQVQEAPSGQA.

Ala-2 bears the N-acetylalanine mark. His-450 contacts Zn(2+). Glu-451 is a catalytic residue. Zn(2+)-binding residues include His-455 and Glu-508.

The protein belongs to the peptidase M49 family. Requires Zn(2+) as cofactor.

The protein resides in the cytoplasm. It catalyses the reaction Release of an N-terminal dipeptide from a peptide comprising four or more residues, with broad specificity. Also acts on dipeptidyl 2-naphthylamides.. Its activity is regulated as follows. Inhibited by spinorphin, an opioid peptide derived from hemoglobin. Its function is as follows. Cleaves and degrades bioactive peptides, including angiotensin, Leu-enkephalin and Met-enkephalin. Also cleaves Arg-Arg-beta-naphthylamide. This chain is Dipeptidyl peptidase 3 (Dpp3), found in Rattus norvegicus (Rat).